Consider the following 64-residue polypeptide: Cytochrome b-c1 complex subunit 9 (64 aa).

The Mitochondrial matrix portion of the chain corresponds to Ser2 to Thr18. A helical membrane pass occupies residues Ser19–Ile43. Topologically, residues Tyr44–Lys63 are mitochondrial intermembrane.

It belongs to the UQCR10/QCR9 family. Component of the ubiquinol-cytochrome c oxidoreductase (cytochrome b-c1 complex, complex III, CIII), a multisubunit enzyme composed of 11 subunits. The complex is composed of 3 respiratory subunits cytochrome b, cytochrome c1 and Rieske protein UQCRFS1, 2 core protein subunits UQCRC1/QCR1 and UQCRC2/QCR2, and 6 low-molecular weight protein subunits UQCRH/QCR6, UQCRB/QCR7, UQCRQ/QCR8, UQCR10/QCR9, UQCR11/QCR10 and subunit 9, the cleavage product of Rieske protein UQCRFS1. The complex exists as an obligatory dimer and forms supercomplexes (SCs) in the inner mitochondrial membrane with NADH-ubiquinone oxidoreductase (complex I, CI) and cytochrome c oxidase (complex IV, CIV), resulting in different assemblies (supercomplex SCI(1)III(2)IV(1) and megacomplex MCI(2)III(2)IV(2)). Interacts with STMP1.

The protein localises to the mitochondrion inner membrane. In terms of biological role, component of the ubiquinol-cytochrome c oxidoreductase, a multisubunit transmembrane complex that is part of the mitochondrial electron transport chain which drives oxidative phosphorylation. The respiratory chain contains 3 multisubunit complexes succinate dehydrogenase (complex II, CII), ubiquinol-cytochrome c oxidoreductase (cytochrome b-c1 complex, complex III, CIII) and cytochrome c oxidase (complex IV, CIV), that cooperate to transfer electrons derived from NADH and succinate to molecular oxygen, creating an electrochemical gradient over the inner membrane that drives transmembrane transport and the ATP synthase. The cytochrome b-c1 complex catalyzes electron transfer from ubiquinol to cytochrome c, linking this redox reaction to translocation of protons across the mitochondrial inner membrane, with protons being carried across the membrane as hydrogens on the quinol. In the process called Q cycle, 2 protons are consumed from the matrix, 4 protons are released into the intermembrane space and 2 electrons are passed to cytochrome c. The chain is Cytochrome b-c1 complex subunit 9 (Uqcr10) from Mus musculus (Mouse).